A 70-amino-acid chain; its full sequence is Movement protein TGBp3 (70 aa).

Residues 1 to 6 (MEANTY) lie on the Lumenal side of the membrane. A helical membrane pass occupies residues 7–27 (LNAIILVLVVTIIAVISTSLV). Residues 28-70 (RTEPCVIKITGESITVLACKLDAETIRAIADLKPLSVERLSFH) lie on the Cytoplasmic side of the membrane.

It belongs to the Tymovirales TGBp3 protein family.

It is found in the host endoplasmic reticulum membrane. Its function is as follows. Plays a role in viral cell-to-cell propagation, by facilitating genome transport to neighboring plant cells through plasmosdesmata. May induce the formation of granular vesicles derived from the Endoplasmic reticulum, which align on actin filaments. This Potato virus X (PVX) protein is Movement protein TGBp3.